The primary structure comprises 295 residues: Putative clathrin assembly protein At5g65370 (295 aa).

In terms of domain architecture, ENTH spans 26–169 (CSSVNAKTID…SIAEVLGITP (144 aa)).

It localises to the membrane. Its subcellular location is the clathrin-coated pit. The protein localises to the golgi apparatus. It is found in the cytoplasmic vesicle. The protein resides in the clathrin-coated vesicle. The sequence is that of Putative clathrin assembly protein At5g65370 from Arabidopsis thaliana (Mouse-ear cress).